The sequence spans 376 residues: Formate dehydrogenase 1 (376 aa).

The substrate site is built by Val-97 and Asn-121. NAD(+)-binding positions include 176–177 (RI), Asp-197, 244–248 (PLHKD), Thr-270, Asp-296, and 325–328 (HISG).

This sequence belongs to the D-isomer specific 2-hydroxyacid dehydrogenase family. FDH subfamily. As to quaternary structure, homodimer.

The protein localises to the cytoplasm. It carries out the reaction formate + NAD(+) = CO2 + NADH. Catalyzes the NAD(+)-dependent oxidation of formate to carbon dioxide. Formate oxidation is the final step in the methanol oxidation pathway in methylotrophic microorganisms. Has a role in the detoxification of exogenous formate in non-methylotrophic organisms. This chain is Formate dehydrogenase 1 (FDH1), found in Saccharomyces cerevisiae (strain YJM789) (Baker's yeast).